The chain runs to 54 residues: Large ribosomal subunit protein bL33 (54 aa).

It belongs to the bacterial ribosomal protein bL33 family.

This Corynebacterium jeikeium (strain K411) protein is Large ribosomal subunit protein bL33.